The sequence spans 429 residues: Glutamate-1-semialdehyde 2,1-aminomutase 1 (429 aa).

Lysine 268 is modified (N6-(pyridoxal phosphate)lysine).

This sequence belongs to the class-III pyridoxal-phosphate-dependent aminotransferase family. HemL subfamily. As to quaternary structure, homodimer. Requires pyridoxal 5'-phosphate as cofactor.

The protein resides in the cytoplasm. It catalyses the reaction (S)-4-amino-5-oxopentanoate = 5-aminolevulinate. Its pathway is porphyrin-containing compound metabolism; protoporphyrin-IX biosynthesis; 5-aminolevulinate from L-glutamyl-tRNA(Glu): step 2/2. This Staphylococcus saprophyticus subsp. saprophyticus (strain ATCC 15305 / DSM 20229 / NCIMB 8711 / NCTC 7292 / S-41) protein is Glutamate-1-semialdehyde 2,1-aminomutase 1.